The sequence spans 711 residues: Arginine decarboxylase 2 (711 aa).

Position 147 is an N6-(pyridoxal phosphate)lysine (K147). Substrate is bound at residue 331 to 341 (IDIGGGLGIDY). The segment at 642-661 (MHTKGGSEGENEEEEEDDEF) is disordered. A compositionally biased stretch (acidic residues) spans 650 to 661 (GENEEEEEDDEF).

Belongs to the Orn/Lys/Arg decarboxylase class-II family. SpeA subfamily. In terms of assembly, homodimer and heterodimer with ADC1. Requires pyridoxal 5'-phosphate as cofactor. Mg(2+) serves as cofactor.

Its subcellular location is the plastid. The protein resides in the chloroplast. The protein localises to the cytoplasm. It is found in the cytosol. The catalysed reaction is L-arginine + H(+) = agmatine + CO2. Its pathway is amine and polyamine biosynthesis; agmatine biosynthesis; agmatine from L-arginine: step 1/1. In terms of biological role, required for the biosynthesis of putrescine. Catalyzes the first step of polyamine (PA) biosynthesis to produce putrescine from arginine. Is a major contributor to basal arginine decarboxylase (ADC) activity and putrescine biosynthesis. Accumulation of putrescine plays a positive role in salt stress tolerance. Accumulation of putrescine plays a positive role in freezing tolerance. Production of PA is essential for normal seed development. Controls PA homeostasis which is crucial for normal plant growth and development. The sequence is that of Arginine decarboxylase 2 from Arabidopsis thaliana (Mouse-ear cress).